We begin with the raw amino-acid sequence, 230 residues long: Fibrillarin-like rRNA/tRNA 2'-O-methyltransferase (230 aa).

Residues Thr87–Thr88, Glu105–Phe106, Asp130–Ala131, and Asp150–Gln153 contribute to the S-adenosyl-L-methionine site.

Belongs to the methyltransferase superfamily. Fibrillarin family. In terms of assembly, interacts with nop5. Component of box C/D small ribonucleoprotein (sRNP) particles that contain rpl7ae, FlpA and nop5, plus a guide RNA.

In terms of biological role, involved in pre-rRNA and tRNA processing. Utilizes the methyl donor S-adenosyl-L-methionine to catalyze the site-specific 2'-hydroxyl methylation of ribose moieties in rRNA and tRNA. Site specificity is provided by a guide RNA that base pairs with the substrate. Methylation occurs at a characteristic distance from the sequence involved in base pairing with the guide RNA. The chain is Fibrillarin-like rRNA/tRNA 2'-O-methyltransferase from Methanococcus maripaludis (strain DSM 14266 / JCM 13030 / NBRC 101832 / S2 / LL).